The chain runs to 352 residues: Histidinol-phosphate aminotransferase (352 aa).

Lys216 is subject to N6-(pyridoxal phosphate)lysine.

It belongs to the class-II pyridoxal-phosphate-dependent aminotransferase family. Histidinol-phosphate aminotransferase subfamily. The cofactor is pyridoxal 5'-phosphate.

The catalysed reaction is L-histidinol phosphate + 2-oxoglutarate = 3-(imidazol-4-yl)-2-oxopropyl phosphate + L-glutamate. The protein operates within amino-acid biosynthesis; L-histidine biosynthesis; L-histidine from 5-phospho-alpha-D-ribose 1-diphosphate: step 7/9. This Methanoculleus marisnigri (strain ATCC 35101 / DSM 1498 / JR1) protein is Histidinol-phosphate aminotransferase.